Reading from the N-terminus, the 278-residue chain is DNA adenine methylase (278 aa).

4 residues coordinate S-adenosyl-L-methionine: Trp-10, Lys-14, Asp-54, and Asp-181.

Belongs to the N(4)/N(6)-methyltransferase family.

It catalyses the reaction a 2'-deoxyadenosine in DNA + S-adenosyl-L-methionine = an N(6)-methyl-2'-deoxyadenosine in DNA + S-adenosyl-L-homocysteine + H(+). In terms of biological role, an alpha subtype methylase, recognizes the double-stranded sequence 5'-GATC-3' and methylates A-2. May be involved in methyl-directed DNA mismatch repair, initiation of chromosome replication and gene expression. In Escherichia coli O157:H7, this protein is DNA adenine methylase (dam).